We begin with the raw amino-acid sequence, 255 residues long: Electron transfer flavoprotein beta subunit lysine methyltransferase (255 aa).

The N-terminal 32 residues, 1-32 (MAFSLCWKAPRSQWSFLQALNSGFPLFPWRTV), are a transit peptide targeting the mitochondrion.

This sequence belongs to the methyltransferase superfamily. ETFBKMT family. As to quaternary structure, interacts with HSPD1; this protein may possibly be a methylation substrate.

It is found in the cytoplasm. It localises to the mitochondrion matrix. The catalysed reaction is L-lysyl-[protein] + 3 S-adenosyl-L-methionine = N(6),N(6),N(6)-trimethyl-L-lysyl-[protein] + 3 S-adenosyl-L-homocysteine + 3 H(+). In terms of biological role, protein-lysine methyltransferase that selectively trimethylates the flavoprotein ETFB in mitochondria. Thereby, may negatively regulate the function of ETFB in electron transfer from Acyl-CoA dehydrogenases to the main respiratory chain. The sequence is that of Electron transfer flavoprotein beta subunit lysine methyltransferase from Rattus norvegicus (Rat).